The primary structure comprises 229 residues: ATP-dependent Clp protease proteolytic subunit 1 (229 aa).

Serine 129 functions as the Nucleophile in the catalytic mechanism. Residue histidine 154 is part of the active site.

Belongs to the peptidase S14 family. Fourteen ClpP subunits assemble into 2 heptameric rings which stack back to back to give a disk-like structure with a central cavity, resembling the structure of eukaryotic proteasomes.

It is found in the cytoplasm. It carries out the reaction Hydrolysis of proteins to small peptides in the presence of ATP and magnesium. alpha-casein is the usual test substrate. In the absence of ATP, only oligopeptides shorter than five residues are hydrolyzed (such as succinyl-Leu-Tyr-|-NHMec, and Leu-Tyr-Leu-|-Tyr-Trp, in which cleavage of the -Tyr-|-Leu- and -Tyr-|-Trp bonds also occurs).. Functionally, cleaves peptides in various proteins in a process that requires ATP hydrolysis. Has a chymotrypsin-like activity. Plays a major role in the degradation of misfolded proteins. This Thermosynechococcus vestitus (strain NIES-2133 / IAM M-273 / BP-1) protein is ATP-dependent Clp protease proteolytic subunit 1.